The chain runs to 244 residues: MMKPKYERILIKLSGEALAGERGVGIDLKTVQEMAKEIQEVAESGIQIALVIGGGNLWRGEPAAEAGMDRVQADYTGMLGTVMNALVMADSLKQLGVDTRVQTAIAMQSVAEPYIRGRALRHLEKGRIVIFGAGIGSPYFSTDTTAALRAAEIEADAILMAKNGVDGVYNADPKKDANAVKFNELTHREVISRGLKIMDATASTLSMDNDIDLVVFNMNEPGNIKRVVFGEPIGTTVSNSSEEK.

Position 12-15 (12-15 (KLSG)) interacts with ATP. The segment at 20–25 (GERGVG) is involved in allosteric activation by GTP. Gly-54 is a binding site for UMP. ATP is bound by residues Gly-55 and Arg-59. UMP contacts are provided by residues Asp-74 and 135–142 (IGSPYFST). Residues Asn-163, Tyr-169, and Asp-172 each contribute to the ATP site.

It belongs to the UMP kinase family. As to quaternary structure, homohexamer.

The protein resides in the cytoplasm. It carries out the reaction UMP + ATP = UDP + ADP. The protein operates within pyrimidine metabolism; CTP biosynthesis via de novo pathway; UDP from UMP (UMPK route): step 1/1. Allosterically activated by GTP. Inhibited by UTP. Its function is as follows. Catalyzes the reversible phosphorylation of UMP to UDP. This chain is Uridylate kinase, found in Streptococcus suis (strain 98HAH33).